Consider the following 269-residue polypeptide: MATKIFALLALHALLVSGTTAAIIPQCSLAPNAIIPQFIPPVTALGNEHLAVQAYPGQQVLSASILQQPIAQLQQQSLAHLTVQTITAQQQQQQQQQQQQQQFLSSLSALAVANQAAYLQQQLLTSNPHSLANAAAYQQQQQLQLAMANPTAYVQQQLLLSNPQAATNAATYLQQQQFQQILPALSQLRMANPTAYLQQQQLLPINQLALANTDAYLQQQQLLPVNPLVVANPLVAAFLQQQQLSSFNQISLVNPALSWQQPIIGGAIF.

Positions 1-21 are cleaved as a signal peptide; sequence MATKIFALLALHALLVSGTTA.

The protein belongs to the zein family.

Its function is as follows. Major seed storage prolamin. The chain is Kafirin PGK1 from Sorghum bicolor (Sorghum).